The following is a 394-amino-acid chain: Argininosuccinate synthase (394 aa).

ATP is bound by residues 7–15 (AYSGGLDTS) and Ala-35. Position 85 (Tyr-85) interacts with L-citrulline. Gly-115 lines the ATP pocket. L-aspartate-binding residues include Thr-117, Asn-121, and Asp-122. Asn-121 is a binding site for L-citrulline. Residues Arg-125, Ser-174, Ser-183, Glu-258, and Tyr-270 each coordinate L-citrulline.

Belongs to the argininosuccinate synthase family. Type 1 subfamily. In terms of assembly, homotetramer.

The protein resides in the cytoplasm. It catalyses the reaction L-citrulline + L-aspartate + ATP = 2-(N(omega)-L-arginino)succinate + AMP + diphosphate + H(+). The protein operates within amino-acid biosynthesis; L-arginine biosynthesis; L-arginine from L-ornithine and carbamoyl phosphate: step 2/3. The protein is Argininosuccinate synthase of Methanopyrus kandleri (strain AV19 / DSM 6324 / JCM 9639 / NBRC 100938).